Reading from the N-terminus, the 976-residue chain is Vacuolar membrane protease (976 aa).

Topologically, residues 1–15 are cytoplasmic; that stretch reads MKLKSVFRSVLKYRK. The helical transmembrane segment at 16–36 threads the bilayer; that stretch reads TNLSLLLLITYSIITLLYIFD. Over 37–359 the chain is Vacuolar; sequence HERYKLNLPK…KFFVISAKTL (323 aa). Residues asparagine 96 and asparagine 121 are each glycosylated (N-linked (GlcNAc...) asparagine). Residues histidine 156 and aspartate 168 each contribute to the Zn(2+) site. A glycan (N-linked (GlcNAc...) asparagine) is linked at asparagine 189. The active-site Proton acceptor is glutamate 200. Residue glutamate 201 coordinates Zn(2+). N-linked (GlcNAc...) asparagine glycans are attached at residues asparagine 212 and asparagine 217. Zn(2+) contacts are provided by glutamate 226 and histidine 300. A helical transmembrane segment spans residues 360–380; it reads FYWNCIFLLVSPVVAIGLYLI. Residues 381 to 392 are Cytoplasmic-facing; that stretch reads SRDRMTWKSHSW. Residues 393–412 form a helical membrane-spanning segment; it reads LSWTRFPLSLAAGIIVQKLF. Topologically, residues 413–428 are vacuolar; the sequence is SNDIIRSNPLTFSRNY. The chain crosses the membrane as a helical span at residues 429–449; that stretch reads FWPISAFFTQVIFTSYVLINC. Residues 450–461 are Cytoplasmic-facing; sequence SNFFFPCADMKS. Residues 462–482 traverse the membrane as a helical segment; the sequence is LSIIELFIILWTILLFTSKLL. Over 483–496 the chain is Vacuolar; that stretch reads YSSDYRYTGLYPLS. A helical membrane pass occupies residues 497–517; it reads IFFLLSTIAAILRLLALALGM. Residues 518–627 lie on the Cytoplasmic side of the membrane; the sequence is RTRKRLGREC…NSLKLEYTDY (110 aa). Positions 528-610 are disordered; that stretch reads RDHHSNYSSH…PLLKGSNSME (83 aa). Polar residues predominate over residues 549–558; that stretch reads NLEQPQDQFT. Residues 559–570 are compositionally biased toward low complexity; sequence SSQDDQASIQDD. Residues 582 to 601 show a composition bias toward basic and acidic residues; sequence NVDEDHGMDSSSQQHDERVP. Residues 628 to 648 traverse the membrane as a helical segment; that stretch reads AWIIQFLLIVPIPSFILFNSV. The Vacuolar segment spans residues 649-668; the sequence is DVIMDALNHTVQEGSKATFD. N-linked (GlcNAc...) asparagine glycosylation is present at asparagine 656. Residues 669-689 form a helical membrane-spanning segment; the sequence is VLRFGMVGSILIALPILPFFY. Over 690 to 692 the chain is Cytoplasmic; sequence KVN. The chain crosses the membrane as a helical span at residues 693 to 713; that stretch reads YITISLTALLFLISASKTLLV. The Vacuolar segment spans residues 714 to 976; the sequence is HPFTNSNPLK…LVIVKDAIIL (263 aa). Residues asparagine 768, asparagine 796, asparagine 811, asparagine 866, and asparagine 937 are each glycosylated (N-linked (GlcNAc...) asparagine).

This sequence belongs to the peptidase M28 family. Zn(2+) is required as a cofactor.

It is found in the vacuole membrane. Functionally, may be involved in vacuolar sorting and osmoregulation. This chain is Vacuolar membrane protease, found in Saccharomyces cerevisiae (strain JAY291) (Baker's yeast).